The following is a 217-amino-acid chain: MVGKRNLPVISRNFDLSPGVLRFSASRLRLKKGEKKPKFTKDTSAKLPKLQRNGTKFALGHSKTVTLRKTLTPGTVLIVLAGRHKGKRVVFLKQLPQSGLLLVTGPHKINGFPLRRIGQAFVIATSLKVNVSGVKIPEHINDEYFKRKSTAQKTGKNIFASGKTEYTVSEQRKKDIKTVDAPILAAIKKHPEHKFLFGYLGTRFSLGKNQYPHKMQF.

Belongs to the eukaryotic ribosomal protein eL6 family. In terms of assembly, component of the large ribosomal subunit. May bind IPO9 with low affinity.

Its subcellular location is the cytoplasm. It is found in the cytosol. The protein resides in the rough endoplasmic reticulum. Its function is as follows. Component of the large ribosomal subunit. This chain is Large ribosomal subunit protein eL6 (rpl-6), found in Caenorhabditis elegans.